Consider the following 524-residue polypeptide: GMP synthase [glutamine-hydrolyzing] (524 aa).

The Glutamine amidotransferase type-1 domain occupies P7–S196. C84 functions as the Nucleophile in the catalytic mechanism. Residues H170 and E172 contribute to the active site. The GMPS ATP-PPase domain occupies W197 to R398. Residue S224–A230 participates in ATP binding.

As to quaternary structure, homodimer.

The catalysed reaction is XMP + L-glutamine + ATP + H2O = GMP + L-glutamate + AMP + diphosphate + 2 H(+). The protein operates within purine metabolism; GMP biosynthesis; GMP from XMP (L-Gln route): step 1/1. Catalyzes the synthesis of GMP from XMP. The protein is GMP synthase [glutamine-hydrolyzing] of Nocardia farcinica (strain IFM 10152).